The sequence spans 311 residues: Olfactory receptor 5L2 (311 aa).

At 1–25 the chain is on the extracellular side; that stretch reads MGKENCTTVAEFILLGLSDVPELRV. The N-linked (GlcNAc...) asparagine glycan is linked to N5. The chain crosses the membrane as a helical span at residues 26-46; it reads CLFLLFLLIYGVTLLANLGMT. Over 47-54 the chain is Cytoplasmic; that stretch reads ALIQVSSR. A helical transmembrane segment spans residues 55 to 75; it reads LHTPVYFFLSHLSFVDFCYSS. At 76 to 99 the chain is on the extracellular side; sequence IIVPKMLANIFNKDKAISFLGCMV. The cysteines at positions 97 and 189 are disulfide-linked. A helical transmembrane segment spans residues 100 to 120; it reads QFYLFCTCGVTEVFLLAVMAY. Residues 121 to 139 are Cytoplasmic-facing; the sequence is DRFVAICNPLLYMVTMSQK. A helical transmembrane segment spans residues 140–160; the sequence is LRVELTSCCYFCGTVCSLIHS. Residues 161-196 lie on the Extracellular side of the membrane; that stretch reads SLALRILFYRSNVINHFFCDLPPLLSLACSDVTVNE. An N-linked (GlcNAc...) asparagine glycan is attached at N195. A helical membrane pass occupies residues 197 to 217; sequence TLLFLVATLNESVTIMIILTS. Over 218–237 the chain is Cytoplasmic; it reads YLLILTTILKIHSAESRHKA. The helical transmembrane segment at 238-258 threads the bilayer; that stretch reads FSTCASHLTAITVSHGTILYI. Residues 259 to 271 are Extracellular-facing; it reads YCRPSSGNSGDVD. Residues 272–292 form a helical membrane-spanning segment; that stretch reads KVATVFYTVVIPMLNPLIYSL. Over 293 to 311 the chain is Cytoplasmic; sequence RNKDVNKALRKVMGSKIHS.

The protein belongs to the G-protein coupled receptor 1 family.

The protein localises to the cell membrane. Odorant receptor. This Homo sapiens (Human) protein is Olfactory receptor 5L2 (OR5L2).